The following is a 242-amino-acid chain: tRNA (guanine-N(1)-)-methyltransferase (242 aa).

S-adenosyl-L-methionine-binding positions include Gly115 and 134-139 (LGDFVL). A compositionally biased stretch (basic and acidic residues) spans 210–224 (QEQREQRTAARRPDL). The segment at 210–242 (QEQREQRTAARRPDLMQRWQQRFGADNDSEHRA) is disordered.

This sequence belongs to the RNA methyltransferase TrmD family. As to quaternary structure, homodimer.

It localises to the cytoplasm. It catalyses the reaction guanosine(37) in tRNA + S-adenosyl-L-methionine = N(1)-methylguanosine(37) in tRNA + S-adenosyl-L-homocysteine + H(+). In terms of biological role, specifically methylates guanosine-37 in various tRNAs. This Synechococcus sp. (strain WH7803) protein is tRNA (guanine-N(1)-)-methyltransferase.